A 542-amino-acid polypeptide reads, in one-letter code: Cytochrome P450 monooxygenase TRI1 (542 aa).

A helical transmembrane segment spans residues 37–54 (LIYFLCFVVLGRAVQWFL). Asparagine 167, asparagine 297, and asparagine 428 each carry an N-linked (GlcNAc...) asparagine glycan. Cysteine 469 lines the heme pocket.

This sequence belongs to the cytochrome P450 family. Requires heme as cofactor.

The protein resides in the membrane. The protein operates within sesquiterpene biosynthesis; trichothecene biosynthesis. Its function is as follows. Cytochrome P450 monooxygenase; part of 2-gene cluster involved in trichothecene C-8 modification that mediates the biosynthesis of T2-toxin. The biosynthesis of trichothecenes begins with the cyclization of farnesyl diphosphate to trichodiene and is catalyzed by the trichodiene synthase TRI5. Trichodiene undergoes a series of oxygenations catalyzed by the cytochrome P450 monooxygenase TRI4. TRI4 controls the addition of four oxygens at C-2, C-3, C-11, and the C-12, C-13-epoxide to form the intermediate isotrichotriol. Isotrichotriol then undergoes a non-enzymatic isomerization and cyclization to form isotrichodermol. During this process, the oxygen at the C-2 position becomes the pyran ring oxygen and the hydroxyl group at C-11 is lost. More complex type A trichothecenes are built by modifying isotrichodermol through a series of paired hydroxylation and acetylation or acylation steps. Isotrichodermol is converted to isotrichodermin by the acetyltransferase TRI101. TRI101 encodes a C-3 transacetylase that acts as a self-protection or resistance factor during biosynthesis and that the presence of a free C-3 hydroxyl group is a key component of Fusarium trichothecene phytotoxicity. A second hydroxyl group is added to C-15 by the trichothecene C-15 hydroxylase TRI11, producing 15-decalonectrin, which is then acetylated by TRI3, producing calonectrin. A third hydroxyl group is added at C-4 by the cytochrome P450 monooxygenase TRI13, converting calonectrin to 3,15-diacetoxyspirpenol, which is subsequently acetylated by the acetyltransferase TRI7. A fourth hydroxyl group is added to C-8 by the cytochrome P450 monooxygenase TRI1, followed by the addition of an isovaleryl moiety by TRI16. Finally, the acetyl group is removed from the C-3 position by the trichothecene C-3 esterase TRI8 to produce T-2 toxin. The sequence is that of Cytochrome P450 monooxygenase TRI1 from Fusarium sporotrichioides.